A 152-amino-acid chain; its full sequence is Xanthine-guanine phosphoribosyltransferase (152 aa).

Residues 37–38 (RG), R69, and 88–96 (DDLVDTGGT) contribute to the 5-phospho-alpha-D-ribose 1-diphosphate site. Residue R69 coordinates GMP. D89 provides a ligand contact to Mg(2+). D92 and I135 together coordinate guanine. 2 residues coordinate xanthine: D92 and I135. Residues 92–96 (DTGGT) and 134–135 (WI) each bind GMP.

Belongs to the purine/pyrimidine phosphoribosyltransferase family. XGPT subfamily. As to quaternary structure, homotetramer. The cofactor is Mg(2+).

The protein localises to the cell inner membrane. The enzyme catalyses GMP + diphosphate = guanine + 5-phospho-alpha-D-ribose 1-diphosphate. It carries out the reaction XMP + diphosphate = xanthine + 5-phospho-alpha-D-ribose 1-diphosphate. It catalyses the reaction IMP + diphosphate = hypoxanthine + 5-phospho-alpha-D-ribose 1-diphosphate. Its pathway is purine metabolism; GMP biosynthesis via salvage pathway; GMP from guanine: step 1/1. The protein operates within purine metabolism; XMP biosynthesis via salvage pathway; XMP from xanthine: step 1/1. Functionally, purine salvage pathway enzyme that catalyzes the transfer of the ribosyl-5-phosphate group from 5-phospho-alpha-D-ribose 1-diphosphate (PRPP) to the N9 position of the 6-oxopurines guanine and xanthine to form the corresponding ribonucleotides GMP (guanosine 5'-monophosphate) and XMP (xanthosine 5'-monophosphate), with the release of PPi. To a lesser extent, also acts on hypoxanthine. This Serratia proteamaculans (strain 568) protein is Xanthine-guanine phosphoribosyltransferase.